The chain runs to 131 residues: Putative gene 51 protein (131 aa).

The sequence is that of Putative gene 51 protein (51) from Bacillus phage SP01 (Bacteriophage SP01).